The sequence spans 251 residues: Sugar fermentation stimulation protein homolog (251 aa).

The protein belongs to the SfsA family.

This chain is Sugar fermentation stimulation protein homolog, found in Symbiobacterium thermophilum (strain DSM 24528 / JCM 14929 / IAM 14863 / T).